We begin with the raw amino-acid sequence, 1117 residues long: ATP-dependent RNA helicase mtr4 (1117 aa).

The segment at 19–86 (KSLKEESKNS…DNQDLIPNND (68 aa)) is disordered. The span at 65–79 (SATKRAKIENLKDNQ) shows a compositional bias: basic and acidic residues. The Helicase ATP-binding domain occupies 207–363 (IACIERQESV…WITKIHRQPC (157 aa)). Position 220–227 (220–227 (AHTSAGKT)) interacts with ATP. A DEIH box motif is present at residues 311–314 (DEIH). The tract at residues 414-433 (GDDPAAMATKGNAKKGKTGK) is disordered. The Helicase C-terminal domain maps to 441–642 (DIYKIVKMIM…LSYNMILNLL (202 aa)).

It belongs to the helicase family. SKI2 subfamily. As to quaternary structure, component of the TRAMP complex composed of at least cid14, mtr4, and air1.

It is found in the nucleus. Component of the TRAMP complex which has a poly(A) RNA polymerase activity and is involved in a post-transcriptional quality control mechanism limiting inappropriate expression of genetic information. Polyadenylation is required for the degradative activity of the exosome on several of its nuclear RNA substrates. Required for heterochromatic gene silencing at centromeric repeats by either exosome- or RNAi-mediated degradation of heterochromatic transcripts. This is ATP-dependent RNA helicase mtr4 (mtr4) from Schizosaccharomyces pombe (strain 972 / ATCC 24843) (Fission yeast).